Here is a 95-residue protein sequence, read N- to C-terminus: Integration host factor subunit beta (95 aa).

It belongs to the bacterial histone-like protein family. In terms of assembly, heterodimer of an alpha and a beta chain.

Functionally, this protein is one of the two subunits of integration host factor, a specific DNA-binding protein that functions in genetic recombination as well as in transcriptional and translational control. Involved in hydrogenase gene expression. The chain is Integration host factor subunit beta (ihfB) from Rhodobacter capsulatus (Rhodopseudomonas capsulata).